The primary structure comprises 566 residues: Chaperonin GroEL 1 (566 aa).

Residues 29–32, 86–90, G413, and D492 each bind ATP; these read TIGP and DGTTT. The disordered stretch occupies residues 520–540; sequence DKPEPPAPAGDGGGDPMGGMG. The span at 529 to 540 shows a compositional bias: gly residues; it reads GDGGGDPMGGMG.

Belongs to the chaperonin (HSP60) family. In terms of assembly, forms a cylinder of 14 subunits composed of two heptameric rings stacked back-to-back. Interacts with the co-chaperonin GroES.

The protein resides in the cytoplasm. The catalysed reaction is ATP + H2O + a folded polypeptide = ADP + phosphate + an unfolded polypeptide.. Together with its co-chaperonin GroES, plays an essential role in assisting protein folding. The GroEL-GroES system forms a nano-cage that allows encapsulation of the non-native substrate proteins and provides a physical environment optimized to promote and accelerate protein folding. The protein is Chaperonin GroEL 1 of Prochlorococcus marinus (strain MIT 9313).